An 88-amino-acid chain; its full sequence is Small ribosomal subunit protein bS16 (88 aa).

Belongs to the bacterial ribosomal protein bS16 family.

The sequence is that of Small ribosomal subunit protein bS16 from Leptospira borgpetersenii serovar Hardjo-bovis (strain L550).